The primary structure comprises 693 residues: Elongation factor G (693 aa).

The region spanning 8–283 (PQQRNIGIMA…AVVEYLPSPV (276 aa)) is the tr-type G domain. Residues 17–24 (AHIDAGKT), 81–85 (DTPGH), and 135–138 (NKMD) each bind GTP.

This sequence belongs to the TRAFAC class translation factor GTPase superfamily. Classic translation factor GTPase family. EF-G/EF-2 subfamily.

The protein resides in the cytoplasm. Functionally, catalyzes the GTP-dependent ribosomal translocation step during translation elongation. During this step, the ribosome changes from the pre-translocational (PRE) to the post-translocational (POST) state as the newly formed A-site-bound peptidyl-tRNA and P-site-bound deacylated tRNA move to the P and E sites, respectively. Catalyzes the coordinated movement of the two tRNA molecules, the mRNA and conformational changes in the ribosome. This Oleidesulfovibrio alaskensis (strain ATCC BAA-1058 / DSM 17464 / G20) (Desulfovibrio alaskensis) protein is Elongation factor G.